A 444-amino-acid chain; its full sequence is Multidrug resistance protein MdtA (444 aa).

An N-terminal signal peptide occupies residues 1 to 20 (MKSQSKRTSRLFVFVGVVVA). The span at 37-52 (NNTSGAQQSARGQDTS) shows a compositional bias: polar residues. 2 disordered regions span residues 37 to 60 (NNTS…RNTP) and 399 to 444 (PRSA…AEKS). Positions 409–419 (ASAEKAAAEAE) are enriched in low complexity. A compositionally biased stretch (polar residues) spans 435 to 444 (ARSTTAAEKS).

It belongs to the membrane fusion protein (MFP) (TC 8.A.1) family. As to quaternary structure, part of a tripartite efflux system composed of MdtA, MdtB and MdtC.

Its subcellular location is the cell inner membrane. The protein is Multidrug resistance protein MdtA of Yersinia pseudotuberculosis serotype I (strain IP32953).